The sequence spans 940 residues: Insulin receptor substrate 1 (940 aa).

Residues 8-109 (GMVLSGYHKK…WLDKLLLLQR (102 aa)) enclose the PH domain. One can recognise an IRS-type PTB domain in the interval 122-236 (YEHVWQVIIQ…SAMSAKTDSN (115 aa)). Phosphoserine occurs at positions 284, 285, and 340. Tyr407 carries the phosphotyrosine; by INSR modification. The short motif at 407–410 (YIPM) is the YXXM motif 1 element. Residues 523–540 (NRSQNNISKEGPISGTST) are compositionally biased toward polar residues. Residues 523–549 (NRSQNNISKEGPISGTSTNREKKSTSA) form a disordered region. A Phosphoserine modification is found at Ser548. The YXXM motif 2 motif lies at 639-642 (YLEM). At Tyr883 the chain carries Phosphotyrosine; by INSR. Residues 895 to 915 (NPAKYLKRGSRESPPVATCAE) are disordered. 2 positions are modified to phosphoserine: Ser904 and Ser907. At Tyr920 the chain carries Phosphotyrosine; by INSR.

In terms of assembly, bindings to phosphatidylinositol 3-kinase and SHP2.

In terms of biological role, activates phosphatidylinositol 3-kinase when bound to the regulatory p85 subunit. May mediate the control of various cellular processes by insulin-like peptides. When phosphorylated by the insulin receptor binds specifically to various cellular proteins containing SH2 domains. Involved in control of cell proliferation, cell size, and body and organ growth throughout development. Also has a role in a signaling pathway controlling the physiological response required to endure periods of low nutrient conditions. Insulin/insulin-like growth factor (IGF) signaling pathway has a role in regulating aging and is necessary in the ovary for vitellogenic maturation. This Drosophila ananassae (Fruit fly) protein is Insulin receptor substrate 1.